The primary structure comprises 275 residues: NH(3)-dependent NAD(+) synthetase (275 aa).

Residue 46–53 (GISGGQDS) coordinates ATP. D52 contributes to the Mg(2+) binding site. R140 provides a ligand contact to deamido-NAD(+). T160 contributes to the ATP binding site. E165 contributes to the Mg(2+) binding site. 2 residues coordinate deamido-NAD(+): K173 and D180. ATP contacts are provided by K189 and T211. 260–261 (HK) contacts deamido-NAD(+).

This sequence belongs to the NAD synthetase family. Homodimer.

It carries out the reaction deamido-NAD(+) + NH4(+) + ATP = AMP + diphosphate + NAD(+) + H(+). Its pathway is cofactor biosynthesis; NAD(+) biosynthesis; NAD(+) from deamido-NAD(+) (ammonia route): step 1/1. Catalyzes the ATP-dependent amidation of deamido-NAD to form NAD. Uses ammonia as a nitrogen source. This chain is NH(3)-dependent NAD(+) synthetase, found in Salmonella agona (strain SL483).